The chain runs to 123 residues: WAP four-disulfide core domain protein 5 (123 aa).

The signal sequence occupies residues Met1 to Gly24. 2 consecutive WAP domains span residues Lys27 to Ile74 and Leu75 to Ala121. 8 disulfide bridges follow: Cys34–Cys62, Cys41–Cys66, Cys49–Cys61, Cys55–Cys70, Cys81–Cys109, Cys88–Cys113, Cys96–Cys108, and Cys102–Cys117.

It localises to the secreted. Putative acid-stable proteinase inhibitor. This chain is WAP four-disulfide core domain protein 5 (WFDC5), found in Lemur catta (Ring-tailed lemur).